We begin with the raw amino-acid sequence, 297 residues long: MNAPAPKPGLVIVDKPAGMTSHDVVSKLRRAFSTRKVGHAGTLDPMATGVLVVGIERGTRFLAHMVASTKAYDATIRLGAATSTDDAEGEVISTTDASGLDHRAILAEIANLTGDIMQKPTKVSAIKIDGKRAHERVRDGEEVDIPARPVTVSVFDVLDYRVDSEFYDLDVRVHCSSGTYIRALARDLGNALQVGGHLTALRRTEVGPFTLNDATPLSKLQENPELSLNLDQALTRSYPVLDITEDEGVDLSMGKWLEPRGLKGVHAAVTPSGKAVALIEEKGKRLATVFVAHPNTL.

Asp44 acts as the Nucleophile in catalysis.

It belongs to the pseudouridine synthase TruB family. Type 1 subfamily.

It catalyses the reaction uridine(55) in tRNA = pseudouridine(55) in tRNA. Responsible for synthesis of pseudouridine from uracil-55 in the psi GC loop of transfer RNAs. The polypeptide is tRNA pseudouridine synthase B (Corynebacterium glutamicum (strain R)).